The chain runs to 732 residues: Putative pectinesterase/pectinesterase inhibitor 28 (732 aa).

The chain crosses the membrane as a helical span at residues 17 to 37; it reads VIISISSVLLISMVVAVTIGV. N-linked (GlcNAc...) asparagine glycans are attached at residues Asn40, Asn93, Asn278, and Asn297. Residues 51–204 form a pectinesterase inhibitor 28 region; it reads TTSVKAIKDV…VQLTHNGLAM (154 aa). The segment at 252–548 is pectinesterase 28; that stretch reads DIVVAQDGSG…FTPAQYIQGD (297 aa). 2 residues coordinate substrate: Thr327 and Gln357. The active-site Proton donor; for pectinesterase activity is Asp380. Cys394 and Cys414 are oxidised to a cystine. Asp401 (nucleophile; for pectinesterase activity) is an active-site residue. N-linked (GlcNAc...) asparagine glycosylation is present at Asn413. Substrate is bound by residues Arg469 and Trp471. Asn566, Asn570, and Asn581 each carry an N-linked (GlcNAc...) asparagine glycan. Composition is skewed to low complexity over residues 570–620 and 633–732; these read NSTV…PSTS and PSMV…SSIG. The disordered stretch occupies residues 570 to 732; that stretch reads NSTVTGSSLS…PSASPQSSIG (163 aa).

In the N-terminal section; belongs to the PMEI family. This sequence in the C-terminal section; belongs to the pectinesterase family. As to expression, expressed in flower buds.

The protein resides in the membrane. The enzyme catalyses [(1-&gt;4)-alpha-D-galacturonosyl methyl ester](n) + n H2O = [(1-&gt;4)-alpha-D-galacturonosyl](n) + n methanol + n H(+). It functions in the pathway glycan metabolism; pectin degradation; 2-dehydro-3-deoxy-D-gluconate from pectin: step 1/5. Its function is as follows. Acts in the modification of cell walls via demethylesterification of cell wall pectin. The polypeptide is Putative pectinesterase/pectinesterase inhibitor 28 (PME28) (Arabidopsis thaliana (Mouse-ear cress)).